The sequence spans 500 residues: Keratin, type II cuticular Hb1 (500 aa).

The segment at M1 to E106 is head. The 312-residue stretch at E106–L417 folds into the IF rod domain. A coil 1A region spans residues K107–Y141. Residues Q142 to L151 form a linker 1 region. Residues E152–A252 are coil 1B. A Glycyl lysine isopeptide (Lys-Gly) (interchain with G-Cter in SUMO1) cross-link involves residue K212. A linker 12 region spans residues H253–L269. Residues N270–E413 form a coil 2 region. The tract at residues E414–C500 is tail.

Belongs to the intermediate filament family. In terms of assembly, heterotetramer of two type I and two type II keratins.

The polypeptide is Keratin, type II cuticular Hb1 (Bos taurus (Bovine)).